Consider the following 402-residue polypeptide: MAKRSLSALNSDALRGKRVLVRVDFNVPLNDAGAITDDTRIRAALPTIKDLTGKGAKVILSAHFGRPKGQVNEDMRLTPVAARLSELLGAPVAKTDSCIGSDAEAKVAAMADGDVVLLENVRFFAEEEKNESGFAEKLAALAEVYVNDAFGAAHRAHASTEGVTKYLSPSVAGYLMEKELQYLQGAVDDPKRPLAAIVGGSKVSSKIGVLEALIDKCDKVLIGGGMIFTFYKARGLSVGKSLVEEDKLELAKELEAKAKAKGVQLLLPTDVVLADNFAPDANSQVASIDAIPEGWMGLDIGPDSIKVFQDALGDCKTVIWNGPMGVFEFDKFAAGTNAIATTLAELSAKGCCTIIGGGDSVAAVEKAGLAAQMSHISTGGGASLELLEGKVLPGVAALDEAA.

Substrate contacts are provided by residues 24-26 (DFN), arginine 40, 63-66 (HFGR), arginine 122, and arginine 155. ATP is bound by residues lysine 206, glycine 297, glutamate 328, and 357 to 360 (GGDS).

Belongs to the phosphoglycerate kinase family. Monomer.

Its subcellular location is the cytoplasm. The enzyme catalyses (2R)-3-phosphoglycerate + ATP = (2R)-3-phospho-glyceroyl phosphate + ADP. It participates in carbohydrate degradation; glycolysis; pyruvate from D-glyceraldehyde 3-phosphate: step 2/5. This chain is Phosphoglycerate kinase, found in Synechococcus sp. (strain RCC307).